Here is a 126-residue protein sequence, read N- to C-terminus: Holo-[acyl-carrier-protein] synthase (126 aa).

Positions 8 and 57 each coordinate Mg(2+).

This sequence belongs to the P-Pant transferase superfamily. AcpS family. Mg(2+) serves as cofactor.

It localises to the cytoplasm. It catalyses the reaction apo-[ACP] + CoA = holo-[ACP] + adenosine 3',5'-bisphosphate + H(+). Transfers the 4'-phosphopantetheine moiety from coenzyme A to a Ser of acyl-carrier-protein. In Vibrio cholerae serotype O1 (strain ATCC 39315 / El Tor Inaba N16961), this protein is Holo-[acyl-carrier-protein] synthase.